The following is a 756-amino-acid chain: Ribonucleoside-diphosphate reductase subunit alpha (756 aa).

Residues 5 to 95 form the ATP-cone domain; the sequence is LMVTKRDGTQ…IFHLRKKAYG (91 aa). Residues K9, 15 to 21, T55, and K91 each bind ATP; that span reads EQINLDK. T209 provides a ligand contact to GDP. The cysteines at positions 225 and 462 are disulfide-linked. DTTP contacts are provided by residues 232–234, R262, and R269; that span reads DSL. Residue N437 coordinates GDP. N437 (proton acceptor) is an active-site residue. C439 functions as the Cysteine radical intermediate in the catalytic mechanism. GDP contacts are provided by residues E441 and 623-625; that span reads ETS. The Proton acceptor role is filled by E441.

Belongs to the ribonucleoside diphosphate reductase large chain family. In terms of assembly, tetramer of two alpha and two beta subunits.

The enzyme catalyses a 2'-deoxyribonucleoside 5'-diphosphate + [thioredoxin]-disulfide + H2O = a ribonucleoside 5'-diphosphate + [thioredoxin]-dithiol. With respect to regulation, under complex allosteric control mediated by deoxynucleoside triphosphates and ATP binding to separate specificity and activation sites on the alpha subunit. The type of nucleotide bound at the specificity site determines substrate preference. It seems probable that ATP makes the enzyme reduce CDP and UDP, dGTP favors ADP reduction and dTTP favors GDP reduction. Stimulated by ATP and inhibited by dATP binding to the activity site. Functionally, provides the precursors necessary for DNA synthesis. Catalyzes the biosynthesis of deoxyribonucleotides from the corresponding ribonucleotides. This is Ribonucleoside-diphosphate reductase subunit alpha (nrdA) from Haemophilus influenzae (strain ATCC 51907 / DSM 11121 / KW20 / Rd).